The chain runs to 426 residues: Diaminobutyrate--2-oxoglutarate transaminase (426 aa).

Position 274 is an N6-(pyridoxal phosphate)lysine (lysine 274).

Belongs to the class-III pyridoxal-phosphate-dependent aminotransferase family. Pyridoxal 5'-phosphate serves as cofactor.

It carries out the reaction L-2,4-diaminobutanoate + 2-oxoglutarate = L-aspartate 4-semialdehyde + L-glutamate. The protein operates within amine and polyamine biosynthesis; ectoine biosynthesis; L-ectoine from L-aspartate 4-semialdehyde: step 1/3. Its function is as follows. Catalyzes reversively the conversion of L-aspartate beta-semialdehyde (ASA) to L-2,4-diaminobutyrate (DABA) by transamination with L-glutamate. This Oceanobacillus iheyensis (strain DSM 14371 / CIP 107618 / JCM 11309 / KCTC 3954 / HTE831) protein is Diaminobutyrate--2-oxoglutarate transaminase (ectB).